The primary structure comprises 503 residues: Maturase K (503 aa).

The protein belongs to the intron maturase 2 family. MatK subfamily.

The protein localises to the plastid. The protein resides in the chloroplast. Functionally, usually encoded in the trnK tRNA gene intron. Probably assists in splicing its own and other chloroplast group II introns. The chain is Maturase K from Eucalyptus globulus (Tasmanian blue gum).